The primary structure comprises 132 residues: Fatty acid-binding protein, brain (132 aa).

Residue Val2 is modified to N-acetylvaline. 127-129 (RHY) lines the a fatty acid pocket.

This sequence belongs to the calycin superfamily. Fatty-acid binding protein (FABP) family. As to quaternary structure, monomer.

The protein resides in the cytoplasm. FABPs are thought to play a role in the intracellular transport of long-chain fatty acids and their acyl-CoA esters. Binds oleic and palmitic acids but not palmitoyl CoA. This Bos taurus (Bovine) protein is Fatty acid-binding protein, brain (FABP7).